Consider the following 122-residue polypeptide: MRKKSSTPNRGFRVADQIQRDLTELIARELKDPRVGMVTVQSVEVTPDYAHAKIYFSVLVGDPKECEIALNQAAGFLRNGLFKRLMTHTVPTLHFHFDQTTERAADLNALIAKAVSSRAQDD.

It belongs to the RbfA family. Monomer. Binds 30S ribosomal subunits, but not 50S ribosomal subunits or 70S ribosomes.

It localises to the cytoplasm. In terms of biological role, one of several proteins that assist in the late maturation steps of the functional core of the 30S ribosomal subunit. Associates with free 30S ribosomal subunits (but not with 30S subunits that are part of 70S ribosomes or polysomes). Required for efficient processing of 16S rRNA. May interact with the 5'-terminal helix region of 16S rRNA. In Polaromonas naphthalenivorans (strain CJ2), this protein is Ribosome-binding factor A.